Consider the following 344-residue polypeptide: Uroporphyrinogen decarboxylase (344 aa).

Residues 26–30, D76, Y151, S206, and H321 each bind substrate; that span reads RQAGR.

The protein belongs to the uroporphyrinogen decarboxylase family. As to quaternary structure, homodimer.

The protein resides in the cytoplasm. The enzyme catalyses uroporphyrinogen III + 4 H(+) = coproporphyrinogen III + 4 CO2. The protein operates within porphyrin-containing compound metabolism; protoporphyrin-IX biosynthesis; coproporphyrinogen-III from 5-aminolevulinate: step 4/4. Catalyzes the decarboxylation of four acetate groups of uroporphyrinogen-III to yield coproporphyrinogen-III. This Sinorhizobium fredii (strain NBRC 101917 / NGR234) protein is Uroporphyrinogen decarboxylase.